A 181-amino-acid polypeptide reads, in one-letter code: Beta-lactoglobulin-2 (181 aa).

The signal sequence occupies residues Met1–Ala18. Disulfide bonds link Cys84/Cys179 and Cys124/Cys138.

This sequence belongs to the calycin superfamily. Lipocalin family. As to quaternary structure, monomer.

It localises to the secreted. Functionally, lactoglobulin is the primary component of whey, it binds retinol and is probably involved in the transport of that molecule. The chain is Beta-lactoglobulin-2 (LGB2) from Equus caballus (Horse).